We begin with the raw amino-acid sequence, 393 residues long: Chalcone synthase (393 aa).

C164 is a catalytic residue.

The protein belongs to the thiolase-like superfamily. Chalcone/stilbene synthases family.

The enzyme catalyses (E)-4-coumaroyl-CoA + 3 malonyl-CoA + 3 H(+) = 2',4,4',6'-tetrahydroxychalcone + 3 CO2 + 4 CoA. It functions in the pathway secondary metabolite biosynthesis; flavonoid biosynthesis. The primary product of this enzyme is 4,2',4',6'-tetrahydroxychalcone (also termed naringenin-chalcone or chalcone) which can under specific conditions spontaneously isomerize into naringenin. The polypeptide is Chalcone synthase (CHS) (Vitis vinifera (Grape)).